The primary structure comprises 509 residues: 2,3-bisphosphoglycerate-independent phosphoglycerate mutase (509 aa).

Position 11 (D11) interacts with Mn(2+). Y35 carries the post-translational modification Phosphotyrosine. Mn(2+) is bound at residue S61. S61 functions as the Phosphoserine intermediate in the catalytic mechanism. Substrate is bound by residues H122, 152–153 (RD), R184, R190, 260–263 (RPDR), and K335. Positions 402, 406, 443, 444, and 461 each coordinate Mn(2+).

Belongs to the BPG-independent phosphoglycerate mutase family. Monomer. Mn(2+) is required as a cofactor.

It catalyses the reaction (2R)-2-phosphoglycerate = (2R)-3-phosphoglycerate. It functions in the pathway carbohydrate degradation; glycolysis; pyruvate from D-glyceraldehyde 3-phosphate: step 3/5. Essential for rapid growth and for sporulation. Catalyzes the interconversion of 2-phosphoglycerate and 3-phosphoglycerate. The chain is 2,3-bisphosphoglycerate-independent phosphoglycerate mutase from Bacillus cereus (strain ATCC 10987 / NRS 248).